The primary structure comprises 149 residues: Ribonuclease H (149 aa).

Positions glutamine 5–alanine 146 constitute an RNase H type-1 domain. Mg(2+)-binding residues include aspartate 14, glutamate 52, aspartate 74, and aspartate 138.

Belongs to the RNase H family. Monomer. The cofactor is Mg(2+).

Its subcellular location is the cytoplasm. The catalysed reaction is Endonucleolytic cleavage to 5'-phosphomonoester.. Functionally, endonuclease that specifically degrades the RNA of RNA-DNA hybrids. The polypeptide is Ribonuclease H (Afipia carboxidovorans (strain ATCC 49405 / DSM 1227 / KCTC 32145 / OM5) (Oligotropha carboxidovorans)).